Consider the following 500-residue polypeptide: Lysine--tRNA ligase (500 aa).

2 residues coordinate Mg(2+): Glu410 and Glu417.

The protein belongs to the class-II aminoacyl-tRNA synthetase family. As to quaternary structure, homodimer. Mg(2+) is required as a cofactor.

Its subcellular location is the cytoplasm. The catalysed reaction is tRNA(Lys) + L-lysine + ATP = L-lysyl-tRNA(Lys) + AMP + diphosphate. The chain is Lysine--tRNA ligase from Shewanella loihica (strain ATCC BAA-1088 / PV-4).